Here is a 255-residue protein sequence, read N- to C-terminus: Proliferating cell nuclear antigen 2 (255 aa).

A DNA-binding region spans residues 61–80; sequence HCDRNVSLGLDLKSLGKVLK.

Belongs to the PCNA family. As to quaternary structure, homotrimer. Interacts with the catalytic subunits of two DNA polymerase complexes: PolD1 in the delta complex and PolE1/DNApol-epsilon255 in the epsilon complex.

It is found in the nucleus. The protein resides in the chromosome. Its subcellular location is the cytoplasm. Likely to be an auxiliary protein of DNA polymerase delta complex and is probably involved in the control of DNA replication and repair by increasing the polymerase's processibility. May function independently of PCNA during DNA repair. The protein is Proliferating cell nuclear antigen 2 of Drosophila melanogaster (Fruit fly).